The following is a 497-amino-acid chain: mRNA cleavage and polyadenylation factor CLP1 (497 aa).

The segment at 1 to 20 (MSIPGLGQIAPQQPTTSTTR) is disordered. Residues glutamate 29 and 168–173 (DSGKTT) contribute to the ATP site.

Belongs to the Clp1 family. Clp1 subfamily. In terms of assembly, component of a pre-mRNA cleavage factor complex. Interacts directly with PCF11.

The protein localises to the nucleus. In terms of biological role, required for endonucleolytic cleavage during polyadenylation-dependent pre-mRNA 3'-end formation. In Chaetomium globosum (strain ATCC 6205 / CBS 148.51 / DSM 1962 / NBRC 6347 / NRRL 1970) (Soil fungus), this protein is mRNA cleavage and polyadenylation factor CLP1.